We begin with the raw amino-acid sequence, 543 residues long: Acrosin-binding protein (543 aa).

An N-terminal signal peptide occupies residues 1–25 (MRKPAAGFLPSLLKVLLLPLAPAAA). The interval 26 to 106 (QDSTQASTPG…ASWFESFCQF (81 aa)) is pro-ACR binding. A propeptide spans 26–273 (QDSTQASTPG…NPSSFAPRVR (248 aa)) (removed in mature form). Residues 185-272 (SLGGQEQAPE…SNPSSFAPRV (88 aa)) are disordered. Residues 192 to 220 (APEHKQEQGVEHRQEPTQEHKQEEGQKQE) show a composition bias toward basic and acidic residues. Residues 221-231 (EQEEEQEEEGK) show a composition bias toward acidic residues. Basic and acidic residues predominate over residues 232–243 (QEEGQGTKEGRE). A pro-ACR binding region spans residues 319–427 (LPHTEALLVL…NQVGSPESGR (109 aa)).

As to quaternary structure, binds proacrosin (pro-ACR). Does not bind the mature form of ACR. Post-translationally, phosphorylated on Tyr residues in capacitated sperm. The N-terminus is blocked. In terms of processing, synthesized as a 60-kDa precursor, the 32-kDa mature form is post-translationally produced by the removal of the N-terminal half of the precursor during sperm maturation in the testis and/or epididymis. Expression restricted to testis in normal tissue. Expressed in a wide spectrum of cancers, including bladder, breast, liver, lung and colon cancers.

It localises to the secreted. Its subcellular location is the cytoplasmic vesicle. It is found in the secretory vesicle. The protein localises to the acrosome. Acrosomal protein that maintains proacrosin (pro-ACR) as an enzymatically inactive zymogen in the acrosome. Involved also in the acrosome formation. This chain is Acrosin-binding protein, found in Homo sapiens (Human).